The sequence spans 1097 residues: DNA-directed RNA polymerase subunit beta (1097 aa).

The disordered stretch occupies residues 1072–1097; that stretch reads QDVNPRRSTPSRPTYESLGVADYDED.

The protein belongs to the RNA polymerase beta chain family. In terms of assembly, in cyanobacteria the RNAP catalytic core is composed of 2 alpha, 1 beta, 1 beta', 1 gamma and 1 omega subunit. When a sigma factor is associated with the core the holoenzyme is formed, which can initiate transcription.

It carries out the reaction RNA(n) + a ribonucleoside 5'-triphosphate = RNA(n+1) + diphosphate. DNA-dependent RNA polymerase catalyzes the transcription of DNA into RNA using the four ribonucleoside triphosphates as substrates. The sequence is that of DNA-directed RNA polymerase subunit beta from Parasynechococcus marenigrum (strain WH8102).